A 180-amino-acid polypeptide reads, in one-letter code: Crossover junction endodeoxyribonuclease RuvC (180 aa).

Residues aspartate 7, glutamate 66, and aspartate 138 contribute to the active site. Mg(2+) contacts are provided by aspartate 7, glutamate 66, and aspartate 138.

It belongs to the RuvC family. In terms of assembly, homodimer which binds Holliday junction (HJ) DNA. The HJ becomes 2-fold symmetrical on binding to RuvC with unstacked arms; it has a different conformation from HJ DNA in complex with RuvA. In the full resolvosome a probable DNA-RuvA(4)-RuvB(12)-RuvC(2) complex forms which resolves the HJ. Mg(2+) is required as a cofactor.

The protein resides in the cytoplasm. It carries out the reaction Endonucleolytic cleavage at a junction such as a reciprocal single-stranded crossover between two homologous DNA duplexes (Holliday junction).. Functionally, the RuvA-RuvB-RuvC complex processes Holliday junction (HJ) DNA during genetic recombination and DNA repair. Endonuclease that resolves HJ intermediates. Cleaves cruciform DNA by making single-stranded nicks across the HJ at symmetrical positions within the homologous arms, yielding a 5'-phosphate and a 3'-hydroxyl group; requires a central core of homology in the junction. The consensus cleavage sequence is 5'-(A/T)TT(C/G)-3'. Cleavage occurs on the 3'-side of the TT dinucleotide at the point of strand exchange. HJ branch migration catalyzed by RuvA-RuvB allows RuvC to scan DNA until it finds its consensus sequence, where it cleaves and resolves the cruciform DNA. The protein is Crossover junction endodeoxyribonuclease RuvC of Paraburkholderia phymatum (strain DSM 17167 / CIP 108236 / LMG 21445 / STM815) (Burkholderia phymatum).